Consider the following 206-residue polypeptide: Large ribosomal subunit protein uL4 (206 aa).

The segment at 63-97 is disordered; that stretch reads MYKQKGTGRARHHSARAPQFRGGGKAHGPVVRSHE. A compositionally biased stretch (basic residues) spans 64 to 77; sequence YKQKGTGRARHHSA.

The protein belongs to the universal ribosomal protein uL4 family. Part of the 50S ribosomal subunit.

In terms of biological role, one of the primary rRNA binding proteins, this protein initially binds near the 5'-end of the 23S rRNA. It is important during the early stages of 50S assembly. It makes multiple contacts with different domains of the 23S rRNA in the assembled 50S subunit and ribosome. Its function is as follows. Forms part of the polypeptide exit tunnel. The protein is Large ribosomal subunit protein uL4 of Rhizobium johnstonii (strain DSM 114642 / LMG 32736 / 3841) (Rhizobium leguminosarum bv. viciae).